An 88-amino-acid chain; its full sequence is uncharacterized protein (88 aa).

This is an uncharacterized protein from Sputnik virophage.